Consider the following 259-residue polypeptide: Phosphatidylglycerol--prolipoprotein diacylglyceryl transferase (259 aa).

A run of 4 helical transmembrane segments spans residues 9 to 29, 55 to 75, 92 to 112, and 117 to 137; these read IIFS…VVGI, FITY…VLLY, EGGM…YLFC, and INFL…LFLG. Residue Arg-138 participates in a 1,2-diacyl-sn-glycero-3-phospho-(1'-sn-glycerol) binding. The next 3 helical transmembrane spans lie at 172–192, 201–221, and 228–248; these read QLYE…YAVF, GLNS…IEMF, and IGFI…MLLL.

It belongs to the Lgt family.

The protein resides in the cell inner membrane. It catalyses the reaction L-cysteinyl-[prolipoprotein] + a 1,2-diacyl-sn-glycero-3-phospho-(1'-sn-glycerol) = an S-1,2-diacyl-sn-glyceryl-L-cysteinyl-[prolipoprotein] + sn-glycerol 1-phosphate + H(+). The protein operates within protein modification; lipoprotein biosynthesis (diacylglyceryl transfer). Catalyzes the transfer of the diacylglyceryl group from phosphatidylglycerol to the sulfhydryl group of the N-terminal cysteine of a prolipoprotein, the first step in the formation of mature lipoproteins. This Rickettsia typhi (strain ATCC VR-144 / Wilmington) protein is Phosphatidylglycerol--prolipoprotein diacylglyceryl transferase.